Here is a 787-residue protein sequence, read N- to C-terminus: Formate acetyltransferase (787 aa).

The PFL domain occupies 8–629 (NIFEQAWDGF…GNSPVHKGVF (622 aa)). The S-acetylcysteine intermediate role is filled by cysteine 416. Catalysis depends on cysteine 417, which acts as the Cysteine radical intermediate. One can recognise a Glycine radical domain in the interval 645 to 774 (SPGANPSNKA…LTERVFHEVL (130 aa)). Residue glycine 749 is modified to Glycine radical.

The protein belongs to the glycyl radical enzyme (GRE) family. PFL subfamily. In terms of assembly, homodimer.

Its subcellular location is the cytoplasm. The catalysed reaction is formate + acetyl-CoA = pyruvate + CoA. The protein operates within fermentation; pyruvate fermentation; formate from pyruvate: step 1/1. The protein is Formate acetyltransferase (pfl) of Lactococcus lactis subsp. cremoris (strain MG1363).